A 123-amino-acid polypeptide reads, in one-letter code: Large ribosomal subunit protein bL19 (123 aa).

This sequence belongs to the bacterial ribosomal protein bL19 family.

In terms of biological role, this protein is located at the 30S-50S ribosomal subunit interface and may play a role in the structure and function of the aminoacyl-tRNA binding site. The polypeptide is Large ribosomal subunit protein bL19 (Thermomicrobium roseum (strain ATCC 27502 / DSM 5159 / P-2)).